The sequence spans 110 residues: Phosphoribosyl-ATP pyrophosphatase (110 aa).

The protein belongs to the PRA-PH family.

Its subcellular location is the cytoplasm. The enzyme catalyses 1-(5-phospho-beta-D-ribosyl)-ATP + H2O = 1-(5-phospho-beta-D-ribosyl)-5'-AMP + diphosphate + H(+). Its pathway is amino-acid biosynthesis; L-histidine biosynthesis; L-histidine from 5-phospho-alpha-D-ribose 1-diphosphate: step 2/9. This chain is Phosphoribosyl-ATP pyrophosphatase, found in Clostridium novyi (strain NT).